The primary structure comprises 1877 residues: Proprotein convertase subtilisin/kexin type 5 (1877 aa).

Positions 1-34 are cleaved as a signal peptide; the sequence is MDWDWGNRCSRPGRRDLLCVLALLAGCLLPVCRT. The propeptide occupies 35 to 116; sequence RVYTNHWAVK…QQVVKKRTKR (82 aa). The Extracellular portion of the chain corresponds to 117-1768; sequence DYDLSHAQST…EAEFYEHTKT (1652 aa). Residues 136 to 455 enclose the Peptidase S8 domain; sequence MWYMHCSDNT…FGLMDAEAMV (320 aa). Catalysis depends on charge relay system residues Asp-173 and His-214. 2 N-linked (GlcNAc...) asparagine glycosylation sites follow: Asn-227 and Asn-383. Residue Ser-388 is the Charge relay system of the active site. One can recognise a P/Homo B domain in the interval 463-603; that stretch reads TVPQQHVCVE…SLVLYGTSVQ (141 aa). The Cell attachment site signature appears at 521 to 523; that stretch reads RGD. FU repeat units follow at residues 632–682, 685–732, 736–779, 781–826, 834–881, 884–929, 931–981, 984–1030, 1034–1079, 1081–1123, 1127–1168, 1206–1248, 1252–1299, 1301–1345, 1347–1390, 1392–1438, 1442–1487, 1491–1536, 1540–1585, 1589–1636, 1640–1685, and 1691–1738; these read EDYA…GHYH, KKRC…GSYE, KNVC…GQFF, GHDC…SYYL, YKSC…GEYI, QGHC…WKFE, KKQC…GHYP, GHAC…GEFQ, YEEC…KTFG, KWEC…GFHG, LGEC…STWP, TSQN…GTWP, SGSC…GFYA, DGVC…KHVA, EGVC…SFYP, MRQC…GTYK, NDEC…VEYW, SHRC…GYHT, SQQC…GYYG, SGRC…HYYA, AQTC…GEYR, and NFNC…SHSR. Residues 638 to 1753 form a CRM (Cys-rich motif) region; that stretch reads CDPECSEVGC…CDCQSSTDEC (1116 aa). N-linked (GlcNAc...) asparagine glycosylation is present at Asn-667. 3 N-linked (GlcNAc...) asparagine glycosylation sites follow: Asn-754, Asn-804, and Asn-854. Residues Asn-951 and Asn-1016 are each glycosylated (N-linked (GlcNAc...) asparagine). N-linked (GlcNAc...) asparagine glycosylation is present at Asn-1220. N-linked (GlcNAc...) asparagine glycosylation occurs at Asn-1317. N-linked (GlcNAc...) asparagine glycosylation occurs at Asn-1523. Residues Asn-1711 and Asn-1733 are each glycosylated (N-linked (GlcNAc...) asparagine). A helical membrane pass occupies residues 1769-1789; the sequence is ALLVTSGAMLLLLLGAAAVVW. At 1790-1877 the chain is on the cytoplasmic side; it reads RKSRSRPVAK…EYDDESYSYQ (88 aa). AC stretches follow at residues 1825 to 1844 and 1856 to 1877; these read VIEY…IVYM and YGLL…YSYQ.

Belongs to the peptidase S8 family. PC5A is expressed in most tissues but is most abundant in the intestine and adrenals. PC5B is expressed in the intestine, adrenals and lung but not in the brain.

It localises to the secreted. Its subcellular location is the endomembrane system. Functionally, serine endoprotease that processes various proproteins by cleavage at paired basic amino acids, recognizing the RXXX[KR]R consensus motif. Likely functions in the constitutive and regulated secretory pathways. Plays an essential role in pregnancy establishment by proteolytic activation of a number of important factors such as BMP2, CALD1 and alpha-integrins. May be responsible for the maturation of gastrointestinal peptides. May be involved in the cellular proliferation of adrenal cortex via the activation of growth factors. The sequence is that of Proprotein convertase subtilisin/kexin type 5 (Pcsk5) from Mus musculus (Mouse).